The primary structure comprises 70 residues: Ubiquinol-cytochrome c reductase complex assembly factor 5 (70 aa).

Over 1-19 (MFTRAQVRRILQRVPGKQR) the chain is Mitochondrial matrix. Residues 20 to 41 (FGIYRFLPFFFVLGGTMEWIMI) traverse the membrane as a helical segment. Residues 42-70 (KVRVGQETFYDVYRRKASERQYQRRLEDE) lie on the Mitochondrial intermembrane side of the membrane.

The protein belongs to the UQCC5 family. In terms of assembly, associates with the mitochondrial ribosome. Interacts with UQCC6. Interacts with MT-CYB; interacts with newly synthesizes MT-CYB. Forms a complex, named COMB/coordinator of mitochondrial CYTB biogenesis, composed of UQCC1, UQCC2, UQCC4, UQCC5 and UQCC6; regulates MT-CYB synthesis and promotes its membrane insertion.

It is found in the mitochondrion inner membrane. Functionally, required for the assembly and stability of the mitochondrial ubiquinol-cytochrome c reductase complex (complex III (CIII) or cytochrome b-c1 complex), a multisubunit transmembrane complex that is part of the mitochondrial electron transport chain (ETC) which drives oxidative phosphorylation. Mediates early complex III biogenesis. Participates in regulating the levels of electron transport chain proteins, and therefore energy supply, in response to changes in energy demand. Also involved in the first steps of cytochrome c oxidase complex (complex IV) assembly. The protein is Ubiquinol-cytochrome c reductase complex assembly factor 5 of Homo sapiens (Human).